Consider the following 260-residue polypeptide: 6-carboxyhexanoate--CoA ligase (260 aa).

Belongs to the BioW family. In terms of assembly, homodimer. Mg(2+) serves as cofactor.

It catalyses the reaction heptanedioate + ATP + CoA = 6-carboxyhexanoyl-CoA + AMP + diphosphate. It participates in metabolic intermediate metabolism; pimeloyl-CoA biosynthesis; pimeloyl-CoA from pimelate: step 1/1. Catalyzes the transformation of pimelate into pimeloyl-CoA with concomitant hydrolysis of ATP to AMP. The polypeptide is 6-carboxyhexanoate--CoA ligase (Fibrobacter succinogenes (strain ATCC 19169 / S85)).